A 749-amino-acid polypeptide reads, in one-letter code: Protein lin-54 homolog (749 aa).

K139 is covalently cross-linked (Glycyl lysine isopeptide (Lys-Gly) (interchain with G-Cter in SUMO2)). N6-acetyllysine occurs at positions 244 and 249. S264, S282, S310, and S314 each carry phosphoserine. K357 participates in a covalent cross-link: Glycyl lysine isopeptide (Lys-Gly) (interchain with G-Cter in SUMO2). The CRC domain maps to 521–634 (PRKPCNCTKS…KCIGCKNFEE (114 aa)). A DNA-binding region spans residues 523–536 (KPCNCTKSLCLKLY). Zn(2+) is bound by residues C525, C527, C532, C537, C539, C546, C549, C551, and C554. The tract at residues 583–596 (IGKGKEGESDRRHS) is linker. The Zn(2+) site is built by C599, C601, C606, C611, C613, C620, C624, C626, and C629. The DNA-binding stretch occupies residues 599-612 (CNCKRSGCLKNYCE). S635 is subject to Phosphoserine. Glycyl lysine isopeptide (Lys-Gly) (interchain with G-Cter in SUMO2) cross-links involve residues K639, K659, and K661.

Belongs to the lin-54 family. In terms of assembly, component of the DREAM complex (also named LINC complex) at least composed of E2F4, E2F5, LIN9, LIN37, LIN52, LIN54, MYBL1, MYBL2, RBL1, RBL2, RBBP4, RBL2, TFDP1 and TFDP2. The complex exists in quiescent cells where it represses cell cycle-dependent genes. It dissociates in S phase when LIN9, LIN37, LIN52 and LIN54 form a subcomplex that binds to MYBL2.

Its subcellular location is the nucleus. Component of the DREAM complex, a multiprotein complex that can both act as a transcription activator or repressor depending on the context. In G0 phase, the complex binds to more than 800 promoters and is required for repression of E2F target genes. In S phase, the complex selectively binds to the promoters of G2/M genes whose products are required for mitosis and participates in their cell cycle dependent activation. In the complex, acts as a DNA-binding protein that binds the promoter of CDK1 in a sequence-specific manner. Specifically recognizes the consensus motif 5'-TTYRAA-3' in target DNA. This Rattus norvegicus (Rat) protein is Protein lin-54 homolog (Lin54).